The primary structure comprises 452 residues: Keratin, type I cytoskeletal 42 (452 aa).

A head region spans residues threonine 4–serine 93. Residues glutamate 94–tryptophan 129 form a coil 1A region. An IF rod domain is found at glutamate 94–leucine 405. The linker 1 stretch occupies residues tyrosine 130 to threonine 147. Positions isoleucine 148–leucine 239 are coil 1B. A linker 12 region spans residues arginine 240 to isoleucine 262. The tract at residues leucine 263–glutamate 401 is coil 2. The segment at aspartate 402 to histidine 452 is tail.

Belongs to the intermediate filament family. As to quaternary structure, heterodimer of a type I and a type II keratin. Colocalizes with KRT8/KRT18 filament network. In terms of tissue distribution, expressed in nail matrix and nail bed epithelium (at protein level). Also expressed in tongue and digits with weak expression in vibrissae and in both filiform and fungiform papillae of oral mucosa.

The protein localises to the cytoplasm. This chain is Keratin, type I cytoskeletal 42, found in Mus musculus (Mouse).